Consider the following 224-residue polypeptide: Ribose-5-phosphate isomerase A (224 aa).

Residues 26-29, 81-84, and 94-97 contribute to the substrate site; these read TGST, DGAD, and KGGG. Catalysis depends on Glu103, which acts as the Proton acceptor. Lys121 is a substrate binding site.

This sequence belongs to the ribose 5-phosphate isomerase family. As to quaternary structure, homodimer.

The enzyme catalyses aldehydo-D-ribose 5-phosphate = D-ribulose 5-phosphate. It functions in the pathway carbohydrate degradation; pentose phosphate pathway; D-ribose 5-phosphate from D-ribulose 5-phosphate (non-oxidative stage): step 1/1. Its function is as follows. Catalyzes the reversible conversion of ribose-5-phosphate to ribulose 5-phosphate. This is Ribose-5-phosphate isomerase A from Listeria monocytogenes serotype 4b (strain F2365).